Consider the following 570-residue polypeptide: Protein misato homolog 1 (570 aa).

At Ser-495 the chain carries Phosphoserine.

It belongs to the misato family.

The protein resides in the mitochondrion outer membrane. It is found in the cytoplasm. In terms of biological role, involved in the regulation of mitochondrial distribution and morphology. Required for mitochondrial fusion and mitochondrial network formation. The sequence is that of Protein misato homolog 1 (MSTO1) from Pongo pygmaeus (Bornean orangutan).